Consider the following 646-residue polypeptide: Aquaglycerol porin AQY3 (646 aa).

Positions 1-14 are enriched in low complexity; sequence MSYESGRSSSSSES. Disordered regions lie at residues 1–68 and 175–262; these read MSYE…SRNK and KNMD…KKRT. The Cytoplasmic portion of the chain corresponds to 1 to 350; that stretch reads MSYESGRSSS…AKIRYHMREP (350 aa). Positions 19–41 are enriched in basic and acidic residues; sequence TLKEEPNGKIAWEESVKKSRENN. Positions 190–201 are enriched in polar residues; sequence TDISRGGSTTSV. A helical transmembrane segment spans residues 351–371; sequence FAEFLGTLVLVIFGVGGNLQA. At 372-383 the chain is on the extracellular side; it reads TVTKGSGGSYES. A helical membrane pass occupies residues 384–404; it reads LSFAWGFGCMLGVYVAGGISG. The Cytoplasmic portion of the chain corresponds to 405–427; sequence GHINPAVTISMAIFRKFPWKKVP. An NPA 1 motif is present at residues 408–410; the sequence is NPA. Residues 428–448 form a helical membrane-spanning segment; that stretch reads VYIVAQIIGAYFGGAMAYGYF. The Extracellular portion of the chain corresponds to 449–481; the sequence is WSSITEFEGGPHIRTTATGACLFTDPKSYVTWR. Residues 482–502 traverse the membrane as a helical segment; sequence NAFFDEFIGASILVGCLMALL. Residues 503–509 are Cytoplasmic-facing; that stretch reads DDSNAPP. Residues 510 to 530 traverse the membrane as a helical segment; sequence GNGMTALIIGFLVAAIGMALG. The Extracellular portion of the chain corresponds to 531-569; sequence YQTSFTINPARDLGPRIFASMIGYGPHAFHLTHWWWTWG. The NPA 2 signature appears at 538–540; it reads NPA. The helical transmembrane segment at 570-590 threads the bilayer; sequence AWGGPIAGGIAGALIYDIFIF. Residues 591-646 are Cytoplasmic-facing; it reads TGCESPVNYPDNGYIENRVGKLLHAEFHQNDGTVSDESGVNSNSNTGSKKSVPTSS. Positions 621–646 are disordered; the sequence is DGTVSDESGVNSNSNTGSKKSVPTSS.

Belongs to the MIP/aquaporin (TC 1.A.8) family.

The protein localises to the cell membrane. It carries out the reaction glycerol(in) = glycerol(out). Functionally, channel protein that mediates glycerol entry under ethanol stimulation. Does not seem to mediate glycerol uptake under standard conditions. The polypeptide is Aquaglycerol porin AQY3 (Saccharomyces cerevisiae (strain ATCC 204508 / S288c) (Baker's yeast)).